Here is a 349-residue protein sequence, read N- to C-terminus: E3 ubiquitin-protein ligase rnf146 (349 aa).

The tract at residues Met1–Ser21 is disordered. Residues Ser10–Ser21 show a composition bias toward low complexity. The segment at Cys41–Arg79 adopts an RING-type zinc-finger fold. Residues Glu97 to Arg173 enclose the WWE domain. A glycoprotein-binding residues include Tyr113, Arg116, Trp120, Tyr150, Gln159, Arg169, and Lys181. Disordered regions lie at residues Thr226–Leu251 and Asp264–Val349. The segment covering Ser283 to Ala292 has biased composition (polar residues). Acidic residues predominate over residues Trp298 to Ala307. Over residues Val308–Leu317 the composition is skewed to basic and acidic residues.

It is found in the cytoplasm. The protein resides in the cytosol. The protein localises to the nucleus. The enzyme catalyses S-ubiquitinyl-[E2 ubiquitin-conjugating enzyme]-L-cysteine + [acceptor protein]-L-lysine = [E2 ubiquitin-conjugating enzyme]-L-cysteine + N(6)-ubiquitinyl-[acceptor protein]-L-lysine.. It functions in the pathway protein modification; protein ubiquitination. Functionally, E3 ubiquitin-protein ligase that specifically binds poly-ADP-ribosylated proteins and mediates their ubiquitination and subsequent degradation. May regulate many important biological processes, such as cell survival and DNA damage response. Acts as an activator of the Wnt signaling pathway by mediating the ubiquitination of poly-ADP-ribosylated proteins. Neuroprotective protein. Protects against cell death induced by DNA damaging agents and rescues cells from G1 arrest. Promotes cell survival after gamma-irradiation. Facilitates DNA repair. This Salmo salar (Atlantic salmon) protein is E3 ubiquitin-protein ligase rnf146 (rnf146).